Reading from the N-terminus, the 49-residue chain is Large ribosomal subunit protein bL33A (49 aa).

The protein belongs to the bacterial ribosomal protein bL33 family.

The sequence is that of Large ribosomal subunit protein bL33A from Mycoplasmopsis agalactiae (strain NCTC 10123 / CIP 59.7 / PG2) (Mycoplasma agalactiae).